The primary structure comprises 163 residues: UPF0416 protein RBE_1121 (163 aa).

The protein belongs to the UPF0416 family.

This is UPF0416 protein RBE_1121 from Rickettsia bellii (strain RML369-C).